A 428-amino-acid polypeptide reads, in one-letter code: Tryptophan synthase beta chain (428 aa).

Lysine 100 is subject to N6-(pyridoxal phosphate)lysine.

The protein belongs to the TrpB family. As to quaternary structure, tetramer of two alpha and two beta chains. Pyridoxal 5'-phosphate is required as a cofactor.

The enzyme catalyses (1S,2R)-1-C-(indol-3-yl)glycerol 3-phosphate + L-serine = D-glyceraldehyde 3-phosphate + L-tryptophan + H2O. The protein operates within amino-acid biosynthesis; L-tryptophan biosynthesis; L-tryptophan from chorismate: step 5/5. Its function is as follows. The beta subunit is responsible for the synthesis of L-tryptophan from indole and L-serine. This chain is Tryptophan synthase beta chain, found in Streptomyces avermitilis (strain ATCC 31267 / DSM 46492 / JCM 5070 / NBRC 14893 / NCIMB 12804 / NRRL 8165 / MA-4680).